The primary structure comprises 140 residues: Peptidyl-prolyl cis-trans isomerase FKBP2 (140 aa).

The N-terminal stretch at methionine 1–glycine 22 is a signal peptide. The PPIase FKBP-type domain maps to glycine 47 to glutamate 135. The Prevents secretion from ER motif lies at arginine 137 to leucine 140.

This sequence belongs to the FKBP-type PPIase family. FKBP2 subfamily. As to quaternary structure, interacts with ARFGEF1/BIG1 and the C-terminal of EPB41L2.

The protein resides in the endoplasmic reticulum membrane. It carries out the reaction [protein]-peptidylproline (omega=180) = [protein]-peptidylproline (omega=0). Inhibited by both FK506 and rapamycin. Functionally, PPIases accelerate the folding of proteins. It catalyzes the cis-trans isomerization of proline imidic peptide bonds in oligopeptides. This is Peptidyl-prolyl cis-trans isomerase FKBP2 (Fkbp2) from Mus musculus (Mouse).